The chain runs to 93 residues: Putative defensin-like protein 282 (93 aa).

Residues 1-25 form the signal peptide; the sequence is MANATSFIALAYLLASALMTTVVLG. 3 cysteine pairs are disulfide-bonded: cysteine 51/cysteine 83, cysteine 66/cysteine 90, and cysteine 72/cysteine 92.

This sequence belongs to the DEFL family.

The protein localises to the secreted. The chain is Putative defensin-like protein 282 from Arabidopsis thaliana (Mouse-ear cress).